The chain runs to 896 residues: Protein translocase subunit SecA (896 aa).

ATP contacts are provided by residues Q87, 105 to 109 (GEGKT), and D512. The tract at residues 867-889 (QEPARSNRVAGRNDPCPCGSGKK) is disordered. Zn(2+)-binding residues include C882, C884, C893, and C894.

Belongs to the SecA family. In terms of assembly, monomer and homodimer. Part of the essential Sec protein translocation apparatus which comprises SecA, SecYEG and auxiliary proteins SecDF-YajC and YidC. Zn(2+) is required as a cofactor.

It is found in the cell inner membrane. Its subcellular location is the cytoplasm. It catalyses the reaction ATP + H2O + cellular proteinSide 1 = ADP + phosphate + cellular proteinSide 2.. Functionally, part of the Sec protein translocase complex. Interacts with the SecYEG preprotein conducting channel. Has a central role in coupling the hydrolysis of ATP to the transfer of proteins into and across the cell membrane, serving as an ATP-driven molecular motor driving the stepwise translocation of polypeptide chains across the membrane. This Pelobacter propionicus (strain DSM 2379 / NBRC 103807 / OttBd1) protein is Protein translocase subunit SecA.